Consider the following 239-residue polypeptide: Claudin-14 (239 aa).

At 1–7 (MASTAVQ) the chain is on the cytoplasmic side. The helical transmembrane segment at 8–28 (LLGFLLSFLGMVGTLITTILP) threads the bilayer. Residues 29-81 (HWRRTAHVGTNILTAVSYLKGLWMECVWHSTGIYQCQIYRSLLALPRDLQAAR) lie on the Extracellular side of the membrane. A helical membrane pass occupies residues 82 to 102 (ALMVISCLLSGMACACAVVGM). At 103 to 115 (KCTRCAKGTPAKT) the chain is on the cytoplasmic side. Residues 116–136 (TFAVLGGALFLLAGLLCMVAV) traverse the membrane as a helical segment. Topologically, residues 137 to 162 (SWTTNDVVQNFYNPLLPSGMKFEIGQ) are extracellular. A helical membrane pass occupies residues 163–183 (ALYLGFISSSLSLIGGTLLCL). Residues 184 to 239 (SCQDEAPYRPYPPQSRAGATTTATAPAYRPPAAYKDNRAPSVTSAAHSGYRLNDYV) are Cytoplasmic-facing.

Belongs to the claudin family. In terms of tissue distribution, expressed in all sensory epithelia of the inner ear vestibular organs, as well as in liver and kidney.

The protein resides in the cell junction. The protein localises to the tight junction. It localises to the cell membrane. In terms of biological role, plays a major role in tight junction-specific obliteration of the intercellular space, through calcium-independent cell-adhesion activity. This Mus musculus (Mouse) protein is Claudin-14 (Cldn14).